A 603-amino-acid chain; its full sequence is Chaperone protein DnaK (603 aa).

T175 carries the phosphothreonine; by autocatalysis modification. Residues 573–586 are compositionally biased toward low complexity; sequence AQQAQQQNPDNQNN. The tract at residues 573–603 is disordered; the sequence is AQQAQQQNPDNQNNNKDDVTEATVTDDSTKK. Over residues 594 to 603 the composition is skewed to polar residues; it reads ATVTDDSTKK.

It belongs to the heat shock protein 70 family.

Its function is as follows. Acts as a chaperone. The protein is Chaperone protein DnaK of Ureaplasma parvum serovar 3 (strain ATCC 27815 / 27 / NCTC 11736).